A 197-amino-acid polypeptide reads, in one-letter code: Nucleoside triphosphate pyrophosphatase (197 aa).

Asp70 acts as the Proton acceptor in catalysis.

The protein belongs to the Maf family. Requires a divalent metal cation as cofactor.

It localises to the cytoplasm. The catalysed reaction is a ribonucleoside 5'-triphosphate + H2O = a ribonucleoside 5'-phosphate + diphosphate + H(+). It carries out the reaction a 2'-deoxyribonucleoside 5'-triphosphate + H2O = a 2'-deoxyribonucleoside 5'-phosphate + diphosphate + H(+). Nucleoside triphosphate pyrophosphatase. May have a dual role in cell division arrest and in preventing the incorporation of modified nucleotides into cellular nucleic acids. This Shigella flexneri protein is Nucleoside triphosphate pyrophosphatase (yhdE).